Consider the following 467-residue polypeptide: Cytochrome c-552 (467 aa).

The N-terminal stretch at 1–27 (MVKKLTGKSFALSALVAASFVAAGAMA) is a signal peptide. His-87 contributes to the heme c binding site. Residues Cys-115, Cys-118, and Lys-119 each coordinate heme. 6 residues coordinate heme c: Cys-153, Cys-156, His-157, Cys-195, Cys-198, and His-199. 4 residues coordinate Ca(2+): Glu-201, Tyr-202, Lys-250, and Gln-252. Residue Tyr-202 coordinates substrate. Residue His-253 coordinates substrate. Residues His-264, Cys-271, Cys-274, His-275, His-290, Cys-303, Cys-306, His-307, and His-382 each contribute to the heme c site.

The protein belongs to the cytochrome c-552 family. The cofactor is Ca(2+). Heme c serves as cofactor.

It is found in the periplasm. It carries out the reaction 6 Fe(III)-[cytochrome c] + NH4(+) + 2 H2O = 6 Fe(II)-[cytochrome c] + nitrite + 8 H(+). Its pathway is nitrogen metabolism; nitrate reduction (assimilation). Catalyzes the reduction of nitrite to ammonia, consuming six electrons in the process. This is Cytochrome c-552 from Shewanella amazonensis (strain ATCC BAA-1098 / SB2B).